The chain runs to 209 residues: N-acetyltransferase aca1 (209 aa).

The region spanning 26–202 (TNVKNKEELL…DAYIYQYHFP (177 aa)) is the N-acetyltransferase domain. Asparagine 118 serves as a coordination point for substrate. 128-133 (RSKGIG) provides a ligand contact to CoA. 155–156 (NL) is a binding site for substrate.

Belongs to the acetyltransferase family. In terms of assembly, homodimer.

It localises to the cytoplasm. Its subcellular location is the mitochondrion. The catalysed reaction is L-glutamate 5-semialdehyde + acetyl-CoA = N-acetyl-L-glutamate 5-semialdehyde + CoA + H(+). Its function is as follows. N-acetyltransferase involved in oxidative stress resistance. Acetylates the toxic proline metabolism intermediate (S)-1-pyrroline-5-carboxylate (P5C), or more likely its spontaneously forming tautomer glutamate-5-semialdehyde (GSA) into N-acetyl-GSA for arginine synthesis in the mitochondria. P5C has been shown to increase the levels of reactive oxygen species (ROS) in the cell by inhibiting the function of the respiratory chain in the mitochondria. The enzyme is able to reduce intracellular ROS levels under P5C-induced oxidative stress and protects cells from damage by oxidative stress. Also acetylates and thereby detoxifies the proline analog azetidine-2-carboxylate (AZC), however it is unlikely that AZC is a natural substrate as it occurs only in plants belonging to the Lilaceae family. This chain is N-acetyltransferase aca1, found in Schizosaccharomyces pombe (strain 972 / ATCC 24843) (Fission yeast).